Here is a 110-residue protein sequence, read N- to C-terminus: Disintegrin jerdostatin (110 aa).

The first 20 residues, 1–20, serve as a signal peptide directing secretion; sequence MIQVLLVTICLAVFPYQVSS. Positions 21–67 are excised as a propeptide; sequence KTLKSGSVNEYEVVNPGTVTGLPKGAVKQPEKKHEPMKGNTLQKLPL. Residues 27–110 enclose the Disintegrin domain; it reads SVNEYEVVNP…CECPSYPGNG (84 aa). 4 disulfide bridges follow: Cys-68–Cys-77, Cys-73–Cys-96, Cys-74–Cys-101, and Cys-86–Cys-103. Residues 88–90 carry the Cell attachment site; atypical (RTS) motif; the sequence is RTS.

Belongs to the disintegrin family. Short disintegrin subfamily. In terms of assembly, monomer. Two conformers are found, they may differ by their disulfide bond connectivities. Conformer 2 is 33 times less active than conformer 1. Conformer 2 may represent a non-native protein. Post-translationally, the C-terminal dipeptide may be post-translationally removed, as seen in disintegrins that possess a KTS integrin-binding motif. As to expression, expressed by the venom gland.

The protein localises to the secreted. Its function is as follows. Recombinant protein inhibits the adhesion of alpha-1/beta-1-K562 (ITGA1/ITGB1) cells to collagen IV with an IC(50) of 80 nM. This chain is Disintegrin jerdostatin, found in Protobothrops jerdonii (Jerdon's pitviper).